The chain runs to 210 residues: Large ribosomal subunit protein uL3 (210 aa).

It belongs to the universal ribosomal protein uL3 family. As to quaternary structure, part of the 50S ribosomal subunit. Forms a cluster with proteins L14 and L19.

Functionally, one of the primary rRNA binding proteins, it binds directly near the 3'-end of the 23S rRNA, where it nucleates assembly of the 50S subunit. This chain is Large ribosomal subunit protein uL3, found in Pseudothermotoga lettingae (strain ATCC BAA-301 / DSM 14385 / NBRC 107922 / TMO) (Thermotoga lettingae).